Consider the following 335-residue polypeptide: MNQFYKRHFLRLLDFTPAEIIALLDLATELKKDKKSGCEQQKLVGKNIALIFEKDSTRTRCSFEVAAYDQGARVTYLGPGGSQIGHKESIKDTARVLGRMYDGIQYRGYGQRVVETLAEFAGVPVWNGLTNEFHPTQLLADLLTMREHLPNKSLNKMTLAYLGDTRNNMGNSLLEAAALVGMDLRLVAPKACWPEEAFVISCQALAQKTGGKITLTEDIAEGVNGADFLYTDVWVSMGEPKEVWQERITLLKPYQVNMRVLTLTGNPQVKFLHCLPAFHDDQTTIGKQMAEQYDLPGGMEVTEEVFESAHSIVFDQAENRLHTIKAVMVATMSKI.

Carbamoyl phosphate-binding positions include 56–59, Q83, R107, and 134–137; these read STRT and HPTQ. L-ornithine is bound by residues N168, D232, and 236-237; that span reads SM. Carbamoyl phosphate is bound by residues 274–275 and R320; that span reads CL.

This sequence belongs to the aspartate/ornithine carbamoyltransferase superfamily. OTCase family.

Its subcellular location is the cytoplasm. It carries out the reaction carbamoyl phosphate + L-ornithine = L-citrulline + phosphate + H(+). It functions in the pathway amino-acid biosynthesis; L-arginine biosynthesis; L-arginine from L-ornithine and carbamoyl phosphate: step 1/3. Reversibly catalyzes the transfer of the carbamoyl group from carbamoyl phosphate (CP) to the N(epsilon) atom of ornithine (ORN) to produce L-citrulline. In Yersinia pseudotuberculosis serotype I (strain IP32953), this protein is Ornithine carbamoyltransferase.